Reading from the N-terminus, the 664-residue chain is DNA topoisomerase 4 subunit B (664 aa).

Residues Tyr-7, Asn-47, Asp-74, 114 to 120 (GLHGVGA), and Lys-341 each bind ATP. The segment at 386–418 (REAARKAREDARSGKKNKRKDTLLSGKLTPAQS) is disordered. Residues 387-398 (EAARKAREDARS) show a composition bias toward basic and acidic residues. The 115-residue stretch at 424–538 (NELYLVEGDS…AGRVFIALPP (115 aa)) folds into the Toprim domain. 3 residues coordinate Mg(2+): Glu-430, Asp-503, and Asp-505.

The protein belongs to the type II topoisomerase family. ParE type 2 subfamily. In terms of assembly, heterotetramer composed of ParC and ParE. Mg(2+) is required as a cofactor. It depends on Mn(2+) as a cofactor. The cofactor is Ca(2+).

The catalysed reaction is ATP-dependent breakage, passage and rejoining of double-stranded DNA.. Its function is as follows. Topoisomerase IV is essential for chromosome segregation. It relaxes supercoiled DNA. Performs the decatenation events required during the replication of a circular DNA molecule. This is DNA topoisomerase 4 subunit B from Staphylococcus epidermidis (strain ATCC 35984 / DSM 28319 / BCRC 17069 / CCUG 31568 / BM 3577 / RP62A).